The following is a 749-amino-acid chain: Amyloid-beta A4 precursor protein-binding family A member 2 (749 aa).

Disordered stretches follow at residues 1-94 (MAHQ…PEEE) and 130-343 (DTDE…NNIP). Position 11 is a phosphoserine (Ser11). Over residues 70 to 80 (GDSSSDYVNNT) the composition is skewed to polar residues. 2 stretches are compositionally biased toward acidic residues: residues 81-94 (SEEE…PEEE) and 131-142 (TDECQEAVEEWT). The tract at residues 185-270 (HYCASKEGYQ…SAEACPPIKA (86 aa)) is STXBP1-binding. Ser208 is subject to Phosphoserine. A compositionally biased stretch (acidic residues) spans 218–227 (DLEDQEEDID). Residues 237 to 247 (LSMTSITSASE) are compositionally biased toward polar residues. Residues 305 to 315 (RTPEERPKWPH) are compositionally biased toward basic and acidic residues. Residues 366–555 (LIDGIIFAAN…IINTQEMYND (190 aa)) form the PID domain. 2 consecutive PDZ domains span residues 568–653 (ELQL…NIVS) and 659–735 (TVLI…MPAA).

As to quaternary structure, part of a multimeric complex containing STXBP1 and syntaxin-1. Binds to the cytoplasmic domain of amyloid-beta protein, and to the nuclear factor NF-kappa-B/p65 via its PDZ domain. Interacts with the N-terminal domain of NECAB3.

Putative function in synaptic vesicle exocytosis by binding to STXBP1, an essential component of the synaptic vesicle exocytotic machinery. May modulate processing of the amyloid-beta precursor protein (APP) and hence formation of APP-beta. The protein is Amyloid-beta A4 precursor protein-binding family A member 2 (APBA2) of Pongo abelii (Sumatran orangutan).